Consider the following 470-residue polypeptide: uncharacterized protein (470 aa).

Residues 418 to 453 (SECCEEQEEKEKKKEKEKEKKKEKDDDDDQQNNNNN) adopt a coiled-coil conformation. Residues 423-470 (EQEEKEKKKEKEKEKKKEKDDDDDQQNNNNNDQNGLGLGLGLNFGLNL) form a disordered region. The span at 426–441 (EKEKKKEKEKEKKKEK) shows a compositional bias: basic and acidic residues. The segment covering 448–457 (QNNNNNDQNG) has biased composition (low complexity).

This is an uncharacterized protein from Acidianus bottle-shaped virus (isolate Italy/Pozzuoli) (ABV).